We begin with the raw amino-acid sequence, 247 residues long: 2,3-bisphosphoglycerate-dependent phosphoglycerate mutase (247 aa).

Residues 8 to 15, 21 to 22, R60, 87 to 90, K98, 114 to 115, and 183 to 184 contribute to the substrate site; these read RHGESVWN, TG, ERHY, RR, and GN. H9 acts as the Tele-phosphohistidine intermediate in catalysis. Residue E87 is the Proton donor/acceptor of the active site.

This sequence belongs to the phosphoglycerate mutase family. BPG-dependent PGAM subfamily. Homodimer.

It carries out the reaction (2R)-2-phosphoglycerate = (2R)-3-phosphoglycerate. It functions in the pathway carbohydrate degradation; glycolysis; pyruvate from D-glyceraldehyde 3-phosphate: step 3/5. Its function is as follows. Catalyzes the interconversion of 2-phosphoglycerate and 3-phosphoglycerate. In Geobacter metallireducens (strain ATCC 53774 / DSM 7210 / GS-15), this protein is 2,3-bisphosphoglycerate-dependent phosphoglycerate mutase.